We begin with the raw amino-acid sequence, 269 residues long: MKI67 FHA domain-interacting nucleolar phosphoprotein (269 aa).

The region spanning 45 to 123 (GVLYVGHLPR…RIIKCHVIPP (79 aa)) is the RRM domain. The disordered stretch occupies residues 234 to 269 (DEIVIKVKPLPENSDDVEESEEESAEEDEGEEEEAA). Acidic residues predominate over residues 246-269 (NSDDVEESEEESAEEDEGEEEEAA).

Its subcellular location is the nucleus. The protein localises to the nucleolus. Functionally, plays an essential role in early embryonic development. This Danio rerio (Zebrafish) protein is MKI67 FHA domain-interacting nucleolar phosphoprotein (nifk).